A 520-amino-acid chain; its full sequence is Phosphoenolpyruvate carboxykinase (ATP) (520 aa).

Residues arginine 61, phenylalanine 196, and lysine 202 each coordinate substrate. ATP contacts are provided by residues lysine 202, histidine 222, and 238-246 (GLSGTGKTT). Residues lysine 202 and histidine 222 each contribute to the Mn(2+) site. Residue aspartate 259 participates in Mn(2+) binding. Residues glutamate 287, arginine 324, 443–444 (RI), and threonine 449 contribute to the ATP site. Residue arginine 324 coordinates substrate.

This sequence belongs to the phosphoenolpyruvate carboxykinase (ATP) family. Mn(2+) is required as a cofactor.

It is found in the cytoplasm. The catalysed reaction is oxaloacetate + ATP = phosphoenolpyruvate + ADP + CO2. Its pathway is carbohydrate biosynthesis; gluconeogenesis. Its function is as follows. Involved in the gluconeogenesis. Catalyzes the conversion of oxaloacetate (OAA) to phosphoenolpyruvate (PEP) through direct phosphoryl transfer between the nucleoside triphosphate and OAA. The protein is Phosphoenolpyruvate carboxykinase (ATP) of Amoebophilus asiaticus (strain 5a2).